Reading from the N-terminus, the 436-residue chain is MIDYINVIGAGLAGCEAAWQIAKRGIKVKLFEMKPKKFSPAHHMETFAELVCSNSLRSNQLENAVGLLKEEMRLLNSIIMKCADAAQVPAGGALAVDRTKFSQMVTELIKQNENIEVINEEVRELPKEGITIVATGPLTSGDLSKHLADFVGEGYLHFFDAAAPIVTFESIDMNKAFKAARYGRGTDDYINCPMNKEEYEIFWNELVNAELAEVKDFDREVVFEGCMPVETMAKRGKDTLRFGPLKPVGLVDPNTGKEPYAVVQLRQDNSEGTMYNMVGFQTRLKWPEQKRVFRLIPGLENAEFVRYGVMHRNTFINSPVLLDATYCLKKSPNIYFAGQITGVEGYVESASSGMVAGINAAMDFLGKDRVVFPKSTAIGALSHYVSDSSIKNFQPMNVNFGIMESFPLKIRDKRKRNYETAMRALKILKEYVSKYS.

9-14 (GAGLAG) serves as a coordination point for FAD.

Belongs to the MnmG family. TrmFO subfamily. FAD serves as cofactor.

The protein localises to the cytoplasm. The enzyme catalyses uridine(54) in tRNA + (6R)-5,10-methylene-5,6,7,8-tetrahydrofolate + NADH + H(+) = 5-methyluridine(54) in tRNA + (6S)-5,6,7,8-tetrahydrofolate + NAD(+). The catalysed reaction is uridine(54) in tRNA + (6R)-5,10-methylene-5,6,7,8-tetrahydrofolate + NADPH + H(+) = 5-methyluridine(54) in tRNA + (6S)-5,6,7,8-tetrahydrofolate + NADP(+). In terms of biological role, catalyzes the folate-dependent formation of 5-methyl-uridine at position 54 (M-5-U54) in all tRNAs. The chain is Methylenetetrahydrofolate--tRNA-(uracil-5-)-methyltransferase TrmFO from Acetivibrio thermocellus (strain ATCC 27405 / DSM 1237 / JCM 9322 / NBRC 103400 / NCIMB 10682 / NRRL B-4536 / VPI 7372) (Clostridium thermocellum).